The following is a 308-amino-acid chain: MASNPDFLWCKEERKQESFFKVLKRSDMSSEDTRAIPYDFVINFSDNELSGDMKFRVQWGNSWKVKISKNPRFYFMEKSGWEKFVIDNALGDHEFLTFTHKGQMSFTVKIFNKDGKEMMQPPQSRASFASSSRVKTEQDVKREEEVLVSSDSRSRGPTTAAETNRGGSYKRKLNFGKKKAEETQTYKRTERTQNSKRTERVVSKERVYAGEPSSSVAGFKIFISKSYIKSLAIPKPFGNYMPKEKTRVKIHHPDGEKTWKVVFVVKERGQIFSGGWKRLCKEYPVVFGDTCKFTLITPLELLLVVSKP.

A DNA-binding region (TF-B3 1) is located at residues 19 to 114; the sequence is FFKVLKRSDM…SFTVKIFNKD (96 aa). The segment at 117–198 is disordered; sequence EMMQPPQSRA…TERTQNSKRT (82 aa). The segment covering 121-133 has biased composition (polar residues); that stretch reads PPQSRASFASSSR. Residues 134-145 are compositionally biased toward basic and acidic residues; the sequence is VKTEQDVKREEE. Positions 149-166 are enriched in polar residues; the sequence is SSDSRSRGPTTAAETNRG. The span at 168-177 shows a compositional bias: basic residues; that stretch reads SYKRKLNFGK. Residues 178–198 show a composition bias toward basic and acidic residues; the sequence is KKAEETQTYKRTERTQNSKRT. Positions 216–308 form a DNA-binding region, TF-B3 2; that stretch reads VAGFKIFISK…LELLLVVSKP (93 aa).

The protein localises to the nucleus. The polypeptide is B3 domain-containing protein REM23 (REM23) (Arabidopsis thaliana (Mouse-ear cress)).